We begin with the raw amino-acid sequence, 490 residues long: Colicin-5 (490 aa).

A compositionally biased stretch (polar residues) spans M1 to S20. Disordered regions lie at residues M1 to G29 and Q146 to R171. The segment covering Q146–A170 has biased composition (basic and acidic residues). Residues I447–I467 form a helical membrane-spanning segment.

The protein belongs to the channel forming colicin family.

It localises to the host membrane. This colicin is a channel-forming colicin. This class of transmembrane toxins depolarize the cytoplasmic membrane, leading to dissipation of cellular energy. Its function is as follows. Colicins are polypeptide toxins produced by and active against E.coli and closely related bacteria. The sequence is that of Colicin-5 (cfa) from Escherichia coli.